The following is a 307-amino-acid chain: Aspartate carbamoyltransferase catalytic subunit (307 aa).

Positions 58 and 59 each coordinate carbamoyl phosphate. An L-aspartate-binding site is contributed by K86. Carbamoyl phosphate contacts are provided by R108, H136, and Q139. L-aspartate contacts are provided by R169 and R223. 2 residues coordinate carbamoyl phosphate: G264 and P265.

Belongs to the aspartate/ornithine carbamoyltransferase superfamily. ATCase family. In terms of assembly, heterododecamer (2C3:3R2) of six catalytic PyrB chains organized as two trimers (C3), and six regulatory PyrI chains organized as three dimers (R2).

It carries out the reaction carbamoyl phosphate + L-aspartate = N-carbamoyl-L-aspartate + phosphate + H(+). Its pathway is pyrimidine metabolism; UMP biosynthesis via de novo pathway; (S)-dihydroorotate from bicarbonate: step 2/3. In terms of biological role, catalyzes the condensation of carbamoyl phosphate and aspartate to form carbamoyl aspartate and inorganic phosphate, the committed step in the de novo pyrimidine nucleotide biosynthesis pathway. The chain is Aspartate carbamoyltransferase catalytic subunit from Syntrophus aciditrophicus (strain SB).